The chain runs to 358 residues: Cyanide hydratase (358 aa).

The CN hydrolase domain occupies 8 to 287 (YKAAAVNAEP…QGLLFVDIDL (280 aa)). Residue E48 is the Proton acceptor of the active site. The active site involves K130. C165 (nucleophile) is an active-site residue.

It belongs to the carbon-nitrogen hydrolase superfamily. Nitrilase family. Oligomer of dimers, forming left-handed helical fibers.

The catalysed reaction is formamide = hydrogen cyanide + H2O. Catalyzes the hydration of cyanide to formamide. Degradation of cyanide may be important for plant pathogenic fungi in infection of cyanogenic plants. The chain is Cyanide hydratase from Penicillium rubens (strain ATCC 28089 / DSM 1075 / NRRL 1951 / Wisconsin 54-1255) (Penicillium chrysogenum).